Reading from the N-terminus, the 538-residue chain is indole-2-monooxygenase (538 aa).

The helical transmembrane segment at 22 to 42 threads the bilayer; it reads ALLLAIPFSLLLLPLLLRYLA. Cys-481 contributes to the heme binding site.

It belongs to the cytochrome P450 family. The cofactor is heme.

It is found in the membrane. The catalysed reaction is indole + reduced [NADPH--hemoprotein reductase] + O2 = indolin-2-one + oxidized [NADPH--hemoprotein reductase] + H2O + H(+). It functions in the pathway secondary metabolite biosynthesis; 2,4-dihydroxy-1,4-benzoxazin-3-one biosynthesis; 2,4-dihydroxy-1,4-benzoxazin-3-one from indoleglycerol phosphate: step 2/5. In terms of biological role, catalyzes the conversion of indole to indolin-2-one. The chain is indole-2-monooxygenase (CYP71C4) from Zea mays (Maize).